The following is a 101-amino-acid chain: NAD(P)H-quinone oxidoreductase subunit 4L, chloroplastic (101 aa).

3 consecutive transmembrane segments (helical) span residues 2 to 22 (MLEH…YGLI), 32 to 52 (MCLE…SDLF), and 61 to 81 (IFSI…PAIV).

The protein belongs to the complex I subunit 4L family. NDH is composed of at least 16 different subunits, 5 of which are encoded in the nucleus.

It localises to the plastid. Its subcellular location is the chloroplast thylakoid membrane. It carries out the reaction a plastoquinone + NADH + (n+1) H(+)(in) = a plastoquinol + NAD(+) + n H(+)(out). The enzyme catalyses a plastoquinone + NADPH + (n+1) H(+)(in) = a plastoquinol + NADP(+) + n H(+)(out). NDH shuttles electrons from NAD(P)H:plastoquinone, via FMN and iron-sulfur (Fe-S) centers, to quinones in the photosynthetic chain and possibly in a chloroplast respiratory chain. The immediate electron acceptor for the enzyme in this species is believed to be plastoquinone. Couples the redox reaction to proton translocation, and thus conserves the redox energy in a proton gradient. In Ceratophyllum demersum (Rigid hornwort), this protein is NAD(P)H-quinone oxidoreductase subunit 4L, chloroplastic.